Here is a 795-residue protein sequence, read N- to C-terminus: Mitochondrial intermediate peptidase (795 aa).

The N-terminal 22 residues, 1 to 22 (MLKTLNRRSWTCRQCIRILRRN), are a transit peptide targeting the mitochondrion. Residue His561 coordinates Zn(2+). The active site involves Glu562. 2 residues coordinate Zn(2+): His565 and His568.

Belongs to the peptidase M3 family. It depends on Zn(2+) as a cofactor.

It localises to the mitochondrion matrix. The enzyme catalyses Release of an N-terminal octapeptide as second stage of processing of some proteins imported into the mitochondrion.. Functionally, cleaves proteins, imported into the mitochondrion, to their mature size. While most mitochondrial precursor proteins are processed to the mature form in one step by mitochondrial processing peptidase (MPP), the sequential cleavage by MIP of an octapeptide after initial processing by MPP is a required step for a subgroup of nuclear-encoded precursor proteins destined for the matrix or the inner membrane. This chain is Mitochondrial intermediate peptidase (OCT1), found in Coccidioides immitis (strain RS) (Valley fever fungus).